A 256-amino-acid polypeptide reads, in one-letter code: tRNA (guanine-N(7)-)-methyltransferase (256 aa).

Positions 17-45 (TCETVPGLPQKKHYRQRAHSNPHSDHDIE) are disordered. The segment covering 26–36 (QKKHYRQRAHS) has biased composition (basic residues). S-adenosyl-L-methionine contacts are provided by residues Gly-74, 97–98 (EI), 132–133 (NA), and Leu-152. The active site involves Asp-155. An S-adenosyl-L-methionine-binding site is contributed by 230–232 (TEE).

The protein belongs to the class I-like SAM-binding methyltransferase superfamily. TrmB family.

Its subcellular location is the nucleus. It carries out the reaction guanosine(46) in tRNA + S-adenosyl-L-methionine = N(7)-methylguanosine(46) in tRNA + S-adenosyl-L-homocysteine. It participates in tRNA modification; N(7)-methylguanine-tRNA biosynthesis. In terms of biological role, catalyzes the formation of N(7)-methylguanine at position 46 (m7G46) in tRNA. This is tRNA (guanine-N(7)-)-methyltransferase from Caenorhabditis elegans.